Consider the following 235-residue polypeptide: Proteasome subunit alpha type-2-A (235 aa).

A Glycyl lysine isopeptide (Lys-Gly) (interchain with G-Cter in ubiquitin) cross-link involves residue Lys-64.

The protein belongs to the peptidase T1A family. As to quaternary structure, component of the 20S core complex of the 26S proteasome. The 26S proteasome is composed of a core protease (CP), known as the 20S proteasome, capped at one or both ends by the 19S regulatory particle (RP/PA700). The 20S proteasome core is composed of 28 subunits that are arranged in four stacked rings, resulting in a barrel-shaped structure. The two end rings are each formed by seven alpha subunits, and the two central rings are each formed by seven beta subunits. The catalytic chamber with the active sites is on the inside of the barrel.

Its subcellular location is the cytoplasm. It localises to the nucleus. Functionally, the proteasome is a multicatalytic proteinase complex which is characterized by its ability to cleave peptides with Arg, Phe, Tyr, Leu, and Glu adjacent to the leaving group at neutral or slightly basic pH. The proteasome has an ATP-dependent proteolytic activity. The polypeptide is Proteasome subunit alpha type-2-A (PAB1) (Arabidopsis thaliana (Mouse-ear cress)).